The chain runs to 437 residues: Indole diterpene prenyltransferase anaPT (437 aa).

Positions 1-28 (MSPLSMQTDSVQGTAENKSLETNGTSND) are disordered. L-tryptophan contacts are provided by residues 102 to 103 (GF) and E111. R124, K208, Y210, Y282, Q355, Y357, Y422, and Y426 together coordinate dimethylallyl diphosphate.

Belongs to the tryptophan dimethylallyltransferase family.

The catalysed reaction is (R)-benzodiazepinedione + dimethylallyl diphosphate = (2R,3S,11R)-aszonalenin + diphosphate. The enzyme catalyses (S)-benzodiazepinedione + dimethylallyl diphosphate = (2R,3S,11S)-aszonalenin + diphosphate. The protein operates within alkaloid biosynthesis. Indole diterpene prenyltransferase; part of the gene cluster that mediates the biosynthesis of the prenylated pyrroloindoline diketopiperazine acetylaszonalenin. The first step in the pathway is the formation of (R)-benzodiazepinedione by condensation of tryptophan and anthranilic acid catalyzed by the non-ribosomal peptide synthetase anaPS. The prenyltransferase anaPT then converts (R)-benzodiazepinedione to aszonalenin in the presence of dimethylallyl diphosphate (DMAPP) via C3-prenylation. The last step in the biosynthesis of acetylaszonalenin via acetylation of aszonalenin at position N1 catalyzed by anaAT. The protein is Indole diterpene prenyltransferase anaPT of Neosartorya fischeri (strain ATCC 1020 / DSM 3700 / CBS 544.65 / FGSC A1164 / JCM 1740 / NRRL 181 / WB 181) (Aspergillus fischerianus).